Consider the following 717-residue polypeptide: Serologically defined colon cancer antigen 8 homolog (717 aa).

Residues S4 and S28 each carry the phosphoserine modification. A disordered region spans residues 84–115 (QTNKENETSPPRRRKLSPSRPSECDDGSMPTM). Coiled-coil stretches lie at residues 129-168 (IHHLEAEVKFCKDELSGMKNRVQVVVLENERLQQELKSQR), 221-278 (DANK…LAAS), 352-590 (EEAN…SEQY), and 622-712 (RSQI…LPSM). The segment at 216–717 (TASTGDANKW…QLPSMPQSDC (502 aa)) is sufficient for homodimerization.

In terms of assembly, homodimer. Interacts with OFD1; the interaction is direct. Interacts with FAM161A. Interacts with RABEP2, ERC1 and CEP131. In terms of tissue distribution, expressed in liver, kidney, spleen, brain, heart and muscle. Expressed in photoreceptor cells of the retina.

The protein localises to the cytoplasm. Its subcellular location is the cytoskeleton. It localises to the microtubule organizing center. The protein resides in the centrosome. It is found in the centriole. The protein localises to the cilium basal body. Its subcellular location is the cell junction. Its function is as follows. Plays a role in the establishment of cell polarity and epithelial lumen formation. Also plays an essential role in ciliogenesis and subsequent Hedgehog signaling pathway that requires the presence of intact primary cilia for pathway activation. Mechanistically, interacts with and mediates RABEP2 centrosomal localization which is critical for ciliogenesis. This chain is Serologically defined colon cancer antigen 8 homolog (Sdccag8), found in Mus musculus (Mouse).